A 1795-amino-acid polypeptide reads, in one-letter code: Protein TIC 214 (1795 aa).

6 helical membrane passes run 19-39 (IINS…FSIG), 68-88 (FIAG…HLAL), 91-111 (PHTI…WNNH), 133-153 (VFLN…SSML), 176-196 (VGWL…LVWI), and 227-247 (IFSI…PSPI). Residues 1490 to 1517 (EKESTGQVEFESDKEQQRNSESALSNQE) are disordered. The segment covering 1508–1517 (NSESALSNQE) has biased composition (polar residues).

This sequence belongs to the TIC214 family. In terms of assembly, part of the Tic complex.

Its subcellular location is the plastid. The protein localises to the chloroplast inner membrane. Its function is as follows. Involved in protein precursor import into chloroplasts. May be part of an intermediate translocation complex acting as a protein-conducting channel at the inner envelope. This Crucihimalaya wallichii (Rock-cress) protein is Protein TIC 214.